We begin with the raw amino-acid sequence, 100 residues long: Putative antiporter subunit mnhF2 (100 aa).

The next 3 membrane-spanning stretches (helical) occupy residues 5–25, 38–60, and 65–87; these read FTQI…LVCL, VVSF…VIFN, and LDSI…RFIG.

The protein belongs to the CPA3 antiporters (TC 2.A.63) subunit F family. May form a heterooligomeric complex that consists of seven subunits: mnhA2, mnhB2, mnhC2, mnhD2, mnhE2, mnhF2 and mnhG2.

It is found in the cell membrane. The polypeptide is Putative antiporter subunit mnhF2 (mnhF2) (Staphylococcus epidermidis (strain ATCC 35984 / DSM 28319 / BCRC 17069 / CCUG 31568 / BM 3577 / RP62A)).